The following is a 105-amino-acid chain: Thioredoxin (105 aa).

The region spanning 1 to 105 (ATMTLTDANF…LEAQLADVLQ (105 aa)) is the Thioredoxin domain. Cysteines 29 and 32 form a disulfide.

In terms of biological role, participates in various redox reactions through the reversible oxidation of its active center dithiol to a disulfide and catalyzes dithiol-disulfide exchange reactions. The protein is Thioredoxin (trxA) of Alicyclobacillus acidocaldarius subsp. acidocaldarius (Bacillus acidocaldarius).